The following is a 322-amino-acid chain: 4-diphosphocytidyl-2-C-methyl-D-erythritol kinase (322 aa).

Residue K25 is part of the active site. 110–120 contributes to the ATP binding site; that stretch reads PVAGGMAGGSA. The active site involves D152.

The protein belongs to the GHMP kinase family. IspE subfamily.

The catalysed reaction is 4-CDP-2-C-methyl-D-erythritol + ATP = 4-CDP-2-C-methyl-D-erythritol 2-phosphate + ADP + H(+). It functions in the pathway isoprenoid biosynthesis; isopentenyl diphosphate biosynthesis via DXP pathway; isopentenyl diphosphate from 1-deoxy-D-xylulose 5-phosphate: step 3/6. In terms of biological role, catalyzes the phosphorylation of the position 2 hydroxy group of 4-diphosphocytidyl-2C-methyl-D-erythritol. In Mycolicibacterium vanbaalenii (strain DSM 7251 / JCM 13017 / BCRC 16820 / KCTC 9966 / NRRL B-24157 / PYR-1) (Mycobacterium vanbaalenii), this protein is 4-diphosphocytidyl-2-C-methyl-D-erythritol kinase.